A 473-amino-acid chain; its full sequence is tRNA-2-methylthio-N(6)-dimethylallyladenosine synthase (473 aa).

The 121-residue stretch at 5 to 125 folds into the MTTase N-terminal domain; that stretch reads RKLHIKSYGC…LPQLLARAKA (121 aa). The [4Fe-4S] cluster site is built by C14, C50, C88, C166, C170, and C173. The Radical SAM core domain maps to 152–384; the sequence is RARGISAFVT…QNLIDSQQSA (233 aa). The 63-residue stretch at 387–449 folds into the TRAM domain; sequence RAAVGTTVDV…RYSLLGSLAS (63 aa). Positions 453–462 are enriched in low complexity; the sequence is SRASADDAPP. Positions 453–473 are disordered; sequence SRASADDAPPVGASSPAIMGV.

The protein belongs to the methylthiotransferase family. MiaB subfamily. As to quaternary structure, monomer. The cofactor is [4Fe-4S] cluster.

It localises to the cytoplasm. The enzyme catalyses N(6)-dimethylallyladenosine(37) in tRNA + (sulfur carrier)-SH + AH2 + 2 S-adenosyl-L-methionine = 2-methylsulfanyl-N(6)-dimethylallyladenosine(37) in tRNA + (sulfur carrier)-H + 5'-deoxyadenosine + L-methionine + A + S-adenosyl-L-homocysteine + 2 H(+). Its function is as follows. Catalyzes the methylthiolation of N6-(dimethylallyl)adenosine (i(6)A), leading to the formation of 2-methylthio-N6-(dimethylallyl)adenosine (ms(2)i(6)A) at position 37 in tRNAs that read codons beginning with uridine. In Nitrobacter hamburgensis (strain DSM 10229 / NCIMB 13809 / X14), this protein is tRNA-2-methylthio-N(6)-dimethylallyladenosine synthase.